The primary structure comprises 159 residues: Endoribonuclease YbeY (159 aa).

Zn(2+)-binding residues include histidine 120, histidine 124, and histidine 130.

This sequence belongs to the endoribonuclease YbeY family. Requires Zn(2+) as cofactor.

It is found in the cytoplasm. In terms of biological role, single strand-specific metallo-endoribonuclease involved in late-stage 70S ribosome quality control and in maturation of the 3' terminus of the 16S rRNA. The polypeptide is Endoribonuclease YbeY (Parafrankia sp. (strain EAN1pec)).